The following is a 56-amino-acid chain: MDILLEEVRKVFGNTDEGKLAERLIVAYRQRGARGAREVLKKYLEELGVDVADIES.

The protein resides in the cytoplasm. It localises to the cytoskeleton. Functionally, part of an actin-like archaeal cytoskeleton. This Pyrobaculum calidifontis (strain DSM 21063 / JCM 11548 / VA1) protein is Arcadin-3.